A 371-amino-acid chain; its full sequence is DNA replication and repair protein RecF (371 aa).

Residue 30-37 (GENAQGKT) participates in ATP binding.

It belongs to the RecF family.

The protein resides in the cytoplasm. In terms of biological role, the RecF protein is involved in DNA metabolism; it is required for DNA replication and normal SOS inducibility. RecF binds preferentially to single-stranded, linear DNA. It also seems to bind ATP. The protein is DNA replication and repair protein RecF of Staphylococcus epidermidis (strain ATCC 35984 / DSM 28319 / BCRC 17069 / CCUG 31568 / BM 3577 / RP62A).